The sequence spans 932 residues: Glycine dehydrogenase (decarboxylating) (932 aa).

An N6-(pyridoxal phosphate)lysine modification is found at Lys685.

This sequence belongs to the GcvP family. In terms of assembly, the glycine cleavage system is composed of four proteins: P, T, L and H. Pyridoxal 5'-phosphate is required as a cofactor.

It carries out the reaction N(6)-[(R)-lipoyl]-L-lysyl-[glycine-cleavage complex H protein] + glycine + H(+) = N(6)-[(R)-S(8)-aminomethyldihydrolipoyl]-L-lysyl-[glycine-cleavage complex H protein] + CO2. Its function is as follows. The glycine cleavage system catalyzes the degradation of glycine. The P protein binds the alpha-amino group of glycine through its pyridoxal phosphate cofactor; CO(2) is released and the remaining methylamine moiety is then transferred to the lipoamide cofactor of the H protein. This is Glycine dehydrogenase (decarboxylating) from Brucella melitensis biotype 2 (strain ATCC 23457).